The chain runs to 367 residues: DNA replication and repair protein RecF (367 aa).

Residue 31-38 coordinates ATP; it reads GENGSGKT.

It belongs to the RecF family.

It is found in the cytoplasm. Functionally, the RecF protein is involved in DNA metabolism; it is required for DNA replication and normal SOS inducibility. RecF binds preferentially to single-stranded, linear DNA. It also seems to bind ATP. This is DNA replication and repair protein RecF from Saccharophagus degradans (strain 2-40 / ATCC 43961 / DSM 17024).